We begin with the raw amino-acid sequence, 388 residues long: Succinate--CoA ligase [ADP-forming] subunit beta (388 aa).

Residues K9–H244 form the ATP-grasp domain. ATP contacts are provided by residues K46, G53–G55, E99, S102, and E107. 2 residues coordinate Mg(2+): N199 and D213. Residues N264 and G321–V323 each bind substrate.

Belongs to the succinate/malate CoA ligase beta subunit family. As to quaternary structure, heterotetramer of two alpha and two beta subunits. The cofactor is Mg(2+).

It catalyses the reaction succinate + ATP + CoA = succinyl-CoA + ADP + phosphate. The enzyme catalyses GTP + succinate + CoA = succinyl-CoA + GDP + phosphate. The protein operates within carbohydrate metabolism; tricarboxylic acid cycle; succinate from succinyl-CoA (ligase route): step 1/1. Functionally, succinyl-CoA synthetase functions in the citric acid cycle (TCA), coupling the hydrolysis of succinyl-CoA to the synthesis of either ATP or GTP and thus represents the only step of substrate-level phosphorylation in the TCA. The beta subunit provides nucleotide specificity of the enzyme and binds the substrate succinate, while the binding sites for coenzyme A and phosphate are found in the alpha subunit. This Vibrio campbellii (strain ATCC BAA-1116) protein is Succinate--CoA ligase [ADP-forming] subunit beta.